Reading from the N-terminus, the 286-residue chain is Probable tRNA(His) guanylyltransferase (286 aa).

Mg(2+) contacts are provided by Asp29, Gly30, and Asp76. GTP contacts are provided by residues 29-34 and 75-76; these read DGKKFH and SD.

Belongs to the tRNA(His) guanylyltransferase family. The cofactor is Mg(2+).

It carries out the reaction a 5'-end ribonucleotide-tRNA(His) + GTP + ATP + H2O = a 5'-end phospho-guanosine-ribonucleotide-tRNA(His) + AMP + 2 diphosphate + H(+). Functionally, adds a GMP to the 5'-end of tRNA(His) after transcription and RNase P cleavage. The protein is Probable tRNA(His) guanylyltransferase of Drosophila melanogaster (Fruit fly).